Here is a 267-residue protein sequence, read N- to C-terminus: NAD kinase 2 (267 aa).

Asp52 functions as the Proton acceptor in the catalytic mechanism. NAD(+)-binding positions include 52-53, 124-125, Arg151, Asp153, 164-169, and Ala188; these read DA, NE, and TAYNKS.

The protein belongs to the NAD kinase family. It depends on a divalent metal cation as a cofactor.

It localises to the cytoplasm. It catalyses the reaction NAD(+) + ATP = ADP + NADP(+) + H(+). Functionally, involved in the regulation of the intracellular balance of NAD and NADP, and is a key enzyme in the biosynthesis of NADP. Catalyzes specifically the phosphorylation on 2'-hydroxyl of the adenosine moiety of NAD to yield NADP. This Bacillus cereus (strain ATCC 10987 / NRS 248) protein is NAD kinase 2.